The chain runs to 529 residues: Pheophorbide a oxygenase, chloroplastic (529 aa).

2 disordered regions span residues 1-24 and 46-72; these read MPVM…RRVP and LRVA…TSSA. The transit peptide at 1–47 directs the protein to the chloroplast; the sequence is MPVMAPTASLLLSPRPLPASRRVPSLPALSASGRLRLRRARADTRLR. Residues 82–194 form the Rieske domain; sequence WYPVSLVEDL…TLVSQGLLFV (113 aa). 4 residues coordinate [2Fe-2S] cluster: cysteine 124, histidine 126, cysteine 144, and histidine 147.

Requires [2Fe-2S] cluster as cofactor. In terms of tissue distribution, expressed in leaves. Expressed at low levels in roots, stems, panicles and seeds.

It is found in the plastid. The protein localises to the chloroplast. It carries out the reaction pheophorbide a + 2 reduced [2Fe-2S]-[ferredoxin] + O2 + 2 H(+) = red chlorophyll catabolite + 2 oxidized [2Fe-2S]-[ferredoxin]. It functions in the pathway porphyrin-containing compound metabolism; chlorophyll degradation. Functionally, catalyzes the key reaction of chlorophyll catabolism, porphyrin macrocycle cleavage of pheophorbide a (pheide a) to a primary fluorescent catabolite (pFCC). Works in a two-step reaction with red chlorophyll catabolite reductase (RCCR). Creates the intermediate RCC through the opening of the porphyrin macrocycle by the introduction of one atom of molecular oxygen at the alpha-methine bridge. Seems to be specific for pheide a. Belongs to the chlorophyll catabolic enzymes (CCEs). May play a role in senescence and response to wounding. The sequence is that of Pheophorbide a oxygenase, chloroplastic from Oryza sativa subsp. japonica (Rice).